The chain runs to 375 residues: tRNA-specific 2-thiouridylase MnmA (375 aa).

ATP is bound by residues 8–15 (GLSGGVDS) and methionine 34. The tract at residues 104-106 (NPD) is interaction with target base in tRNA. Cysteine 109 serves as the catalytic Nucleophile. A disulfide bridge connects residues cysteine 109 and cysteine 208. Position 134 (glycine 134) interacts with ATP. The interaction with tRNA stretch occupies residues 158-160 (KDQ). Cysteine 208 functions as the Cysteine persulfide intermediate in the catalytic mechanism. The tract at residues 321–322 (RY) is interaction with tRNA.

This sequence belongs to the MnmA/TRMU family.

It localises to the cytoplasm. The catalysed reaction is S-sulfanyl-L-cysteinyl-[protein] + uridine(34) in tRNA + AH2 + ATP = 2-thiouridine(34) in tRNA + L-cysteinyl-[protein] + A + AMP + diphosphate + H(+). In terms of biological role, catalyzes the 2-thiolation of uridine at the wobble position (U34) of tRNA, leading to the formation of s(2)U34. The protein is tRNA-specific 2-thiouridylase MnmA of Mycoplasma capricolum subsp. capricolum (strain California kid / ATCC 27343 / NCTC 10154).